Here is a 227-residue protein sequence, read N- to C-terminus: Probable septum site-determining protein MinC (227 aa).

This sequence belongs to the MinC family. As to quaternary structure, interacts with MinD and FtsZ.

In terms of biological role, cell division inhibitor that blocks the formation of polar Z ring septums. Rapidly oscillates between the poles of the cell to destabilize FtsZ filaments that have formed before they mature into polar Z rings. Prevents FtsZ polymerization. The protein is Probable septum site-determining protein MinC of Bacillus pumilus (strain SAFR-032).